Consider the following 465-residue polypeptide: MEPSSLELPADTVQRIAAELKCHPTDERVALHLDEEDKLRHFRECFYIPKIQDLPPVDLSLVNKDENAIYFLGNSLGLQPKMVKTYLEEELDKWAKIAAYGHEVGKRPWITGDESIVGLMKDIVGANEKEIALMNALTVNLHLLMLSFFKPTPKRYKILLEAKAFPSDHYAIESQLQLHGLNIEESMRMIKPREGEETLRIEDILEVIEKEGDSIAVILFSGVHFYTGQHFNIPAITKAGQAKGCYVGFDLAHAVGNVELYLHDWGVDFACWCSYKYLNAGAGGIAGAFIHEKHAHTIKPALVGWFGHELSTRFKMDNKLQLIPGVCGFRISNPPILLVCSLHASLEIFKQATMKALRKKSVLLTGYLEYLIKHNYGKDKAATKKPVVNIITPSHVEERGCQLTITFSVPNKDVFQELEKRGVVCDKRNPNGIRVAPVPLYNSFHDVYKFTNLLTSILDSAETKN.

M1 is subject to N-acetylmethionine. Pyridoxal 5'-phosphate is bound by residues L137, T138, 165–168, S221, D250, H253, and Y275; that span reads FPSD. Position 276 is an N6-(pyridoxal phosphate)lysine (K276). W305 and N333 together coordinate pyridoxal 5'-phosphate.

It belongs to the kynureninase family. In terms of assembly, homodimer. Requires pyridoxal 5'-phosphate as cofactor. In terms of tissue distribution, expressed in all tissues tested (heart, brain placenta, lung, liver, skeletal muscle, kidney and pancreas). Highest levels found in placenta, liver and lung. Expressed in all brain regions.

It localises to the cytoplasm. It is found in the cytosol. It catalyses the reaction L-kynurenine + H2O = anthranilate + L-alanine + H(+). The enzyme catalyses 3-hydroxy-L-kynurenine + H2O = 3-hydroxyanthranilate + L-alanine + H(+). It participates in amino-acid degradation; L-kynurenine degradation; L-alanine and anthranilate from L-kynurenine: step 1/1. The protein operates within cofactor biosynthesis; NAD(+) biosynthesis; quinolinate from L-kynurenine: step 2/3. Inhibited by o-methoxybenzoylalanine (OMBA). In terms of biological role, catalyzes the cleavage of L-kynurenine (L-Kyn) and L-3-hydroxykynurenine (L-3OHKyn) into anthranilic acid (AA) and 3-hydroxyanthranilic acid (3-OHAA), respectively. Has a preference for the L-3-hydroxy form. Also has cysteine-conjugate-beta-lyase activity. The polypeptide is Kynureninase (Homo sapiens (Human)).